We begin with the raw amino-acid sequence, 266 residues long: uncharacterized protein (266 aa).

This is an uncharacterized protein from Methanocaldococcus jannaschii (strain ATCC 43067 / DSM 2661 / JAL-1 / JCM 10045 / NBRC 100440) (Methanococcus jannaschii).